We begin with the raw amino-acid sequence, 217 residues long: MKGLIGQKLGMTRLFDKDGVSIPVTMIEITPHRVTQIKNIENDGYCAVQVTTGMKNFKHINRPETGHMIKSGVDAGRGVWEFRCEEAGMPQLSLGDIITIQIFKNVKKVDITGISKGKGFAGTIKRWNFHMQDASHGNSLSHRAPGSIGQNQTPGRVFKGKKMAGQLGNYKVTVQNLDVVNVDVKLNLLLVKGAVPGTIGGNLSIKKSVKINIREKM.

Position 152 is an N5-methylglutamine (glutamine 152).

Belongs to the universal ribosomal protein uL3 family. In terms of assembly, part of the 50S ribosomal subunit. Forms a cluster with proteins L14 and L19. Methylated by PrmB.

One of the primary rRNA binding proteins, it binds directly near the 3'-end of the 23S rRNA, where it nucleates assembly of the 50S subunit. This Blochmanniella pennsylvanica (strain BPEN) protein is Large ribosomal subunit protein uL3.